Here is a 74-residue protein sequence, read N- to C-terminus: Guanine nucleotide-binding protein G(T) subunit gamma-T1 (74 aa).

C71 carries the post-translational modification Cysteine methyl ester. The S-farnesyl cysteine moiety is linked to residue C71. A propeptide spans 72-74 (VIS) (removed in mature form).

The protein belongs to the G protein gamma family. In terms of assembly, g proteins are composed of 3 units, alpha, beta and gamma. Retinal rod outer segment.

The protein resides in the cell membrane. In terms of biological role, guanine nucleotide-binding proteins (G proteins) are involved as a modulator or transducer in various transmembrane signaling systems. The beta and gamma chains are required for the GTPase activity, for replacement of GDP by GTP, and for G protein-effector interaction. The sequence is that of Guanine nucleotide-binding protein G(T) subunit gamma-T1 (GNGT1) from Bos taurus (Bovine).